Consider the following 230-residue polypeptide: Uracil-DNA glycosylase (230 aa).

The active-site Proton acceptor is the aspartate 71.

It belongs to the uracil-DNA glycosylase (UDG) superfamily. UNG family.

The protein resides in the cytoplasm. It carries out the reaction Hydrolyzes single-stranded DNA or mismatched double-stranded DNA and polynucleotides, releasing free uracil.. Functionally, excises uracil residues from the DNA which can arise as a result of misincorporation of dUMP residues by DNA polymerase or due to deamination of cytosine. In Nocardioides sp. (strain ATCC BAA-499 / JS614), this protein is Uracil-DNA glycosylase.